Here is a 533-residue protein sequence, read N- to C-terminus: Adenosine deaminase (533 aa).

An N-terminal signal peptide occupies residues M1–P19.

The protein belongs to the metallo-dependent hydrolases superfamily. Adenosine and AMP deaminases family. ADGF subfamily. It depends on Zn(2+) as a cofactor. In terms of processing, proteolytically cleaved by human mast cell tryptase and chymase. In terms of tissue distribution, female salivary gland (at protein level).

It is found in the secreted. It catalyses the reaction adenosine + H2O + H(+) = inosine + NH4(+). The enzyme catalyses 2'-deoxyadenosine + H2O + H(+) = 2'-deoxyinosine + NH4(+). In terms of biological role, catalyzes the deamination of adenosine to inosine and deoxyadenosine to deoxyinosine. Induces degranulation of host mast cells, and secretion of tryptase and IL6. Modulates enzymatic activities of human tryptase and chymase. Induces release of cytokines, such as IL1B, IL6, TNF, CCL2, IFN-beta (INFB1) and ISG15, from host monocytes and macrophages. Activates host NF-kappa-B signaling pathway in TAK1/MAP3K7-dependent manner. (Microbial infection) Promotes replication of dengue virus type 2 in host cells probably via modulation of cytokine production in host macrophages and monocytes. The sequence is that of Adenosine deaminase from Aedes albopictus (Asian tiger mosquito).